A 205-amino-acid chain; its full sequence is Cytochrome c biogenesis ATP-binding export protein CcmA 2 (205 aa).

In terms of domain architecture, ABC transporter spans 2 to 205 (LEARDLHCER…LALTGGEAGL (204 aa)). 34–41 (GGNGAGKT) contacts ATP.

The protein belongs to the ABC transporter superfamily. CcmA exporter (TC 3.A.1.107) family. The complex is composed of two ATP-binding proteins (CcmA) and two transmembrane proteins (CcmB).

The protein localises to the cell inner membrane. The catalysed reaction is heme b(in) + ATP + H2O = heme b(out) + ADP + phosphate + H(+). Its function is as follows. Part of the ABC transporter complex CcmAB involved in the biogenesis of c-type cytochromes; once thought to export heme, this seems not to be the case, but its exact role is uncertain. Responsible for energy coupling to the transport system. This is Cytochrome c biogenesis ATP-binding export protein CcmA 2 from Salmonella paratyphi A (strain ATCC 9150 / SARB42).